A 372-amino-acid polypeptide reads, in one-letter code: Lipoyl synthase, mitochondrial (372 aa).

The transit peptide at 1–27 directs the protein to the mitochondrion; that stretch reads MSLRCGDAARTLGPRVFGRYFCSPVRP. [4Fe-4S] cluster contacts are provided by Cys106, Cys111, Cys117, Cys137, Cys141, Cys144, and Ser352. In terms of domain architecture, Radical SAM core spans 122–341; sequence EYATATATIM…EKVGNELGFH (220 aa).

Belongs to the radical SAM superfamily. Lipoyl synthase family. It depends on [4Fe-4S] cluster as a cofactor.

The protein localises to the mitochondrion. The enzyme catalyses [[Fe-S] cluster scaffold protein carrying a second [4Fe-4S](2+) cluster] + N(6)-octanoyl-L-lysyl-[protein] + 2 oxidized [2Fe-2S]-[ferredoxin] + 2 S-adenosyl-L-methionine + 4 H(+) = [[Fe-S] cluster scaffold protein] + N(6)-[(R)-dihydrolipoyl]-L-lysyl-[protein] + 4 Fe(3+) + 2 hydrogen sulfide + 2 5'-deoxyadenosine + 2 L-methionine + 2 reduced [2Fe-2S]-[ferredoxin]. Its pathway is protein modification; protein lipoylation via endogenous pathway; protein N(6)-(lipoyl)lysine from octanoyl-[acyl-carrier-protein]: step 2/2. Its function is as follows. Catalyzes the radical-mediated insertion of two sulfur atoms into the C-6 and C-8 positions of the octanoyl moiety bound to the lipoyl domains of lipoate-dependent enzymes, thereby converting the octanoylated domains into lipoylated derivatives. This is Lipoyl synthase, mitochondrial from Homo sapiens (Human).